The following is a 250-amino-acid chain: Cobalt transport protein CbiM (250 aa).

A signal peptide spans Met-1 to Asn-26. A run of 6 helical transmembrane segments spans residues Lys-38–Ile-58, Ser-68–Pro-88, Leu-102–Phe-122, Thr-134–Tyr-154, Leu-165–Ile-185, and Phe-209–Ile-229.

It belongs to the CbiM family. In terms of assembly, forms an energy-coupling factor (ECF) transporter complex composed of an ATP-binding protein (A component, CbiO), a transmembrane protein (T component, CbiQ) and 2 possible substrate-capture proteins (S components, CbiM and CbiN) of unknown stoichimetry.

It localises to the cell membrane. Its pathway is cofactor biosynthesis; adenosylcobalamin biosynthesis. Part of the energy-coupling factor (ECF) transporter complex CbiMNOQ involved in cobalt import. The sequence is that of Cobalt transport protein CbiM from Lachnoclostridium phytofermentans (strain ATCC 700394 / DSM 18823 / ISDg) (Clostridium phytofermentans).